We begin with the raw amino-acid sequence, 650 residues long: Acetyl-coenzyme A synthetase (650 aa).

CoA is bound by residues 191 to 194 (RGGR), T311, and N335. ATP is bound by residues 387–389 (GEP), 411–416 (DTWWQT), D500, and R515. S523 contributes to the CoA binding site. R526 contacts ATP. Mg(2+)-binding residues include V537, H539, and V542. R584 serves as a coordination point for CoA. K609 is subject to N6-acetyllysine.

This sequence belongs to the ATP-dependent AMP-binding enzyme family. Mg(2+) serves as cofactor. Post-translationally, acetylated. Deacetylation by the SIR2-homolog deacetylase activates the enzyme.

It carries out the reaction acetate + ATP + CoA = acetyl-CoA + AMP + diphosphate. Its function is as follows. Catalyzes the conversion of acetate into acetyl-CoA (AcCoA), an essential intermediate at the junction of anabolic and catabolic pathways. AcsA undergoes a two-step reaction. In the first half reaction, AcsA combines acetate with ATP to form acetyl-adenylate (AcAMP) intermediate. In the second half reaction, it can then transfer the acetyl group from AcAMP to the sulfhydryl group of CoA, forming the product AcCoA. The protein is Acetyl-coenzyme A synthetase of Shewanella oneidensis (strain ATCC 700550 / JCM 31522 / CIP 106686 / LMG 19005 / NCIMB 14063 / MR-1).